Here is a 255-residue protein sequence, read N- to C-terminus: Myogenic factor 5 (255 aa).

The region spanning 83 to 134 (DRRKAATMRERRRLKKVNQAFDTLKRCTTTNPNQRLPKVEILRNAIRYIESL) is the bHLH domain. Residues 217–249 (SEQPGLPLQDPASLSPVASTDSQPATPGASSSR) form a disordered region. The segment covering 232 to 249 (PVASTDSQPATPGASSSR) has biased composition (polar residues).

As to quaternary structure, efficient DNA binding requires dimerization with another bHLH protein.

It localises to the nucleus. In terms of biological role, acts as a transcriptional activator that promotes transcription of muscle-specific target genes and plays a role in muscle differentiation. Together with MYOG and MYOD1, co-occupies muscle-specific gene promoter core region during myogenesis. Induces fibroblasts to differentiate into myoblasts. Probable sequence specific DNA-binding protein. The protein is Myogenic factor 5 (MYF5) of Bos taurus (Bovine).